Consider the following 809-residue polypeptide: Carbon monoxide dehydrogenase large chain (809 aa).

Cys388 is a Cu(+) binding site. Position 763 (Glu763) interacts with Mo-molybdopterin cytosine dinucleotide.

In terms of assembly, dimer of heterotrimers. Each heterotrimer consists of a large, a medium and a small subunit. Requires Cu(+) as cofactor. It depends on Mo-molybdopterin cytosine dinucleotide as a cofactor.

The catalysed reaction is CO + a quinone + H2O = a quinol + CO2. Functionally, catalyzes the oxidation of carbon monoxide to carbon dioxide. The sequence is that of Carbon monoxide dehydrogenase large chain (coxL) from Afipia carboxidovorans (strain ATCC 49405 / DSM 1227 / KCTC 32145 / OM5) (Oligotropha carboxidovorans).